The primary structure comprises 421 residues: Dihydroorotase (421 aa).

Zn(2+) contacts are provided by His60 and His62. Substrate is bound by residues 62 to 64 (HFR) and Asn94. Zn(2+)-binding residues include Asp151, His178, and His231. Asn277 contacts substrate. Asp304 contacts Zn(2+). The active site involves Asp304. His308 lines the substrate pocket.

This sequence belongs to the metallo-dependent hydrolases superfamily. DHOase family. Class I DHOase subfamily. Requires Zn(2+) as cofactor.

It carries out the reaction (S)-dihydroorotate + H2O = N-carbamoyl-L-aspartate + H(+). The protein operates within pyrimidine metabolism; UMP biosynthesis via de novo pathway; (S)-dihydroorotate from bicarbonate: step 3/3. In terms of biological role, catalyzes the reversible cyclization of carbamoyl aspartate to dihydroorotate. The polypeptide is Dihydroorotase (Clostridioides difficile (strain 630) (Peptoclostridium difficile)).